Consider the following 205-residue polypeptide: Glycerol-3-phosphate acyltransferase (205 aa).

Residues 1–3 (MSA) lie on the Periplasmic side of the membrane. A helical transmembrane segment spans residues 4 to 24 (IAPGMILFAYLCGSISSAILV). Over 25 to 52 (CRLCGLPDPRTSGSGNPGATNVLRMGGK) the chain is Cytoplasmic. A helical transmembrane segment spans residues 53–73 (GAALAVLIFDVLKGMLPVWGA). The Periplasmic portion of the chain corresponds to 74–80 (YELGVSP). A helical membrane pass occupies residues 81–101 (FWLGLIAIAACLGHIWPIFFG). The Cytoplasmic portion of the chain corresponds to 102-111 (FKGGKGVATA). A helical membrane pass occupies residues 112–132 (FGAIAPIGWDLTGVMAGTWLL). The Periplasmic portion of the chain corresponds to 133–137 (TVLLS). The helical transmembrane segment at 138–158 (GYSSLGAIVSALIAPFYVWWF) threads the bilayer. At 159–205 (KPQFTFPVSMLSCLILLRHHDNIQRLWRRQETKIWTKLKRKREKDPE) the chain is on the cytoplasmic side.

This sequence belongs to the PlsY family. As to quaternary structure, probably interacts with PlsX.

It localises to the cell inner membrane. It carries out the reaction sn-glycerol 3-phosphate + an acyl-CoA = a 1-acyl-sn-glycero-3-phosphate + CoA. The catalysed reaction is a fatty acyl-[ACP] + sn-glycerol 3-phosphate = a 1-acyl-sn-glycero-3-phosphate + holo-[ACP]. Its pathway is lipid metabolism; phospholipid metabolism. Its function is as follows. Catalyzes the transfer of an acyl group from acyl-ACP to glycerol-3-phosphate (G3P) to form lysophosphatidic acid (LPA). This enzyme can also utilize acyl-CoA as fatty acyl donor, but not acyl-PO(4). This chain is Glycerol-3-phosphate acyltransferase, found in Escherichia fergusonii (strain ATCC 35469 / DSM 13698 / CCUG 18766 / IAM 14443 / JCM 21226 / LMG 7866 / NBRC 102419 / NCTC 12128 / CDC 0568-73).